The chain runs to 270 residues: Small ribosomal subunit protein uS2 (270 aa).

Over residues 207–225 (EEPENTEEAAEEAATEEVV) the composition is skewed to acidic residues. Positions 207-270 (EEPENTEEAA…SESAPAPVAA (64 aa)) are disordered. Residues 226-258 (ETAAAEAAAATNADNWDVAPDAGAGAADWAATD) show a composition bias toward low complexity.

The protein belongs to the universal ribosomal protein uS2 family. Component of the small ribosomal subunit. Mature ribosomes consist of a small (40S) and a large (60S) subunit. The 40S subunit contains about 33 different proteins and 1 molecule of RNA (18S). The 60S subunit contains about 49 different proteins and 3 molecules of RNA (25S, 5.8S and 5S). Interacts with RPS21.

Its subcellular location is the cytoplasm. Its function is as follows. Required for the assembly and/or stability of the 40S ribosomal subunit. Required for the processing of the 20S rRNA-precursor to mature 18S rRNA in a late step of the maturation of 40S ribosomal subunits. The polypeptide is Small ribosomal subunit protein uS2 (Yarrowia lipolytica (strain CLIB 122 / E 150) (Yeast)).